The following is a 200-amino-acid chain: ATP-dependent Clp protease proteolytic subunit (200 aa).

The active-site Nucleophile is S101. H126 is an active-site residue.

It belongs to the peptidase S14 family. As to quaternary structure, component of the chloroplastic Clp protease core complex.

It is found in the plastid. It localises to the chloroplast stroma. It carries out the reaction Hydrolysis of proteins to small peptides in the presence of ATP and magnesium. alpha-casein is the usual test substrate. In the absence of ATP, only oligopeptides shorter than five residues are hydrolyzed (such as succinyl-Leu-Tyr-|-NHMec, and Leu-Tyr-Leu-|-Tyr-Trp, in which cleavage of the -Tyr-|-Leu- and -Tyr-|-Trp bonds also occurs).. Cleaves peptides in various proteins in a process that requires ATP hydrolysis. Has a chymotrypsin-like activity. Plays a major role in the degradation of misfolded proteins. The chain is ATP-dependent Clp protease proteolytic subunit from Ostreococcus tauri.